The sequence spans 298 residues: Inosose dehydratase (298 aa).

Belongs to the IolE/MocC family. The cofactor is glutathione. Co(2+) serves as cofactor. Requires Mn(2+) as cofactor.

It catalyses the reaction scyllo-inosose = 3D-3,5/4-trihydroxycyclohexane-1,2-dione + H2O. It participates in polyol metabolism; myo-inositol degradation into acetyl-CoA; acetyl-CoA from myo-inositol: step 2/7. Its function is as follows. Catalyzes the dehydration of inosose (2-keto-myo-inositol, 2KMI or 2,4,6/3,5-pentahydroxycyclohexanone) to 3D-(3,5/4)-trihydroxycyclohexane-1,2-dione (D-2,3-diketo-4-deoxy-epi-inositol). The polypeptide is Inosose dehydratase (Bacillus cereus (strain AH820)).